A 671-amino-acid chain; its full sequence is APC membrane recruitment protein 2 (671 aa).

Disordered stretches follow at residues 1-24 (METS…ASVG), 76-358 (SGGT…SDPS), 391-414 (EAGP…KNPG), and 444-598 (SQTE…PLRT). 2 stretches are compositionally biased toward gly residues: residues 7–21 (RGGG…GAGA) and 126–137 (GGDSGGGGGGRP). Serine 162 is subject to Phosphoserine. Residues 171–182 (GRSENGKGEPVD) are compositionally biased toward basic and acidic residues. 2 positions are modified to phosphoserine: serine 229 and serine 233. Composition is skewed to basic and acidic residues over residues 236–260 (CVKE…RDPA), 276–286 (APARSCREAEG), and 295–307 (ARGE…RRAE). Positions 342 to 353 (APAAPDPASVDP) are enriched in low complexity. Phosphoserine occurs at positions 355 and 358. Low complexity predominate over residues 447-458 (EEQGPEPQEGAA). 2 stretches are compositionally biased toward basic and acidic residues: residues 472–487 (TPKD…DASS) and 498–514 (IEPH…KEQQ).

The protein belongs to the Amer family. As to quaternary structure, interacts with APC.

The protein resides in the cell membrane. In terms of biological role, negative regulator of the canonical Wnt signaling pathway involved in neuroectodermal patterning. Acts by specifically binding phosphatidylinositol 4,5-bisphosphate (PtdIns(4,5)P2), translocating to the cell membrane and interacting with key regulators of the canonical Wnt signaling pathway, such as components of the beta-catenin destruction complex. The polypeptide is APC membrane recruitment protein 2 (AMER2) (Homo sapiens (Human)).